Here is a 180-residue protein sequence, read N- to C-terminus: Acireductone dioxygenase 1 (180 aa).

Fe(2+)-binding residues include histidine 82, histidine 84, glutamate 88, and histidine 127. Ni(2+) is bound by residues histidine 82, histidine 84, glutamate 88, and histidine 127.

It belongs to the acireductone dioxygenase (ARD) family. Fe(2+) is required as a cofactor. Requires Ni(2+) as cofactor.

It is found in the cytoplasm. The protein localises to the nucleus. The enzyme catalyses 1,2-dihydroxy-5-(methylsulfanyl)pent-1-en-3-one + O2 = 4-methylsulfanyl-2-oxobutanoate + formate + 2 H(+). The catalysed reaction is 1,2-dihydroxy-5-(methylsulfanyl)pent-1-en-3-one + O2 = 3-(methylsulfanyl)propanoate + CO + formate + 2 H(+). It functions in the pathway amino-acid biosynthesis; L-methionine biosynthesis via salvage pathway; L-methionine from S-methyl-5-thio-alpha-D-ribose 1-phosphate: step 5/6. Catalyzes 2 different reactions between oxygen and the acireductone 1,2-dihydroxy-3-keto-5-methylthiopentene (DHK-MTPene) depending upon the metal bound in the active site. Fe-containing acireductone dioxygenase (Fe-ARD) produces formate and 2-keto-4-methylthiobutyrate (KMTB), the alpha-ketoacid precursor of methionine in the methionine recycle pathway. Ni-containing acireductone dioxygenase (Ni-ARD) produces methylthiopropionate, carbon monoxide and formate, and does not lie on the methionine recycle pathway. The chain is Acireductone dioxygenase 1 from Sorghum bicolor (Sorghum).